A 146-amino-acid chain; its full sequence is Mitochondrial pyruvate carrier 3 (146 aa).

Residues 1 to 20 (MSASAFNFAFRRFWNSETGP) constitute a mitochondrion transit peptide. 3 helical membrane passes run 23 to 39 (VHFW…FAGL), 55 to 71 (LSLL…SFVI), and 78 to 94 (LASV…YHLT).

It belongs to the mitochondrial pyruvate carrier (MPC) (TC 2.A.105) family. In terms of assembly, the functional 150 kDa pyruvate import complex is a heteromer of MPC1 and either MPC2 or MPC3.

It is found in the mitochondrion. It localises to the mitochondrion inner membrane. In terms of biological role, mediates the uptake of pyruvate into mitochondria. The polypeptide is Mitochondrial pyruvate carrier 3 (Saccharomyces cerevisiae (strain ATCC 204508 / S288c) (Baker's yeast)).